Here is a 62-residue protein sequence, read N- to C-terminus: Antitoxin VbhA (62 aa).

The short motif at 20-25 (SQRLEG) is the Inhibitory (S/T)XXXE(G/N) motif element. Glutamate 24 contacts ATP.

As to quaternary structure, interacts with VbhT.

Functionally, antitoxin component of type II toxin-antitoxin (TA) system VbhT-VbhA. Acts by inhibiting the adenylyltransferase activity of VbhT; competes with ATP-binding and prevents productive ATP-binding to VbhT. The protein is Antitoxin VbhA of Bartonella schoenbuchensis (strain DSM 13525 / NCTC 13165 / R1).